The following is a 91-amino-acid chain: DNA-binding protein HU-beta 2 (91 aa).

The protein belongs to the bacterial histone-like protein family.

Histone-like DNA-binding protein which is capable of wrapping DNA to stabilize it, and thus to prevent its denaturation under extreme environmental conditions. The polypeptide is DNA-binding protein HU-beta 2 (hupB2) (Neisseria meningitidis serogroup A / serotype 4A (strain DSM 15465 / Z2491)).